The sequence spans 371 residues: Poly(rC)-binding protein 3 (371 aa).

KH domains follow at residues 45–95 (TLTI…TITG), 129–182 (PVTL…TISG), and 293–357 (ASTH…QYLI).

As to expression, widely expressed, with highest levels in testis and fat tissues and lowest in heart.

The protein resides in the cytoplasm. Functionally, single-stranded nucleic acid binding protein that binds preferentially to oligo dC. This chain is Poly(rC)-binding protein 3 (Pcbp3), found in Mus musculus (Mouse).